We begin with the raw amino-acid sequence, 1211 residues long: MSQLRPRDSSAGKSSSPRRTDRNPESIDVNSKGGSEGMTSGLVPGTAPHKEDETEAEDDIDCGRLITSKSLATMLTTASMYAGVSQLDDDAIESSALDEPIPYVPYEEDAESVMSESTVGVDTVRDTDSSEQINPEIDGLVALRKKQQHTLSKFELSVVRKRCSQLSLAGSSSGSTRRNSFTLDNNETTRAVKLCEKLKTTFDLSDDDEFVNDYPCWLLHEVFLQGHIYITSRYLLYFAFLPKRDSTVTMSGALSIRSSTTMRFSVRRWAVLKGNYFRLYANSTERYFPSLNIDLRFLLKVELSNPNLEENKPTVFKLITEARTHYFQADSLDNARSWVTDLRKHIFTAKNSGGHVTIKVPLENILDLSIETLFEASQTLKLKVLESEESYAIDDYYFMFFNNGDQVLDSIRQSMKALGIELTDSDSSESDSDVSGSETNGRSTHRKSKLSRSLSVLTPIPRGIGSIYKPIKSSASGIIGAIKKPQKSATRPFSSVVETVVPNDNDSELKQDHAGDAPKDSEEPSTKPSNWSAKSLVQGFLSTTSSISQSMLFASPMHYNNQLFIERGEEDPYFVTNKEEREVAQSRFRKHFSLPDSEELLASYFCHFQKNIPVYGKVYLGTTCICYRSLFPGTNTTMILPYSDIENVYNLKGFRFGYSGLVIVIRAHEELFFEFGSNESRDDCDLFLLKQLDFTKSHKNAHSEQKRKRNDSIKLAESVQLADARLRYFETRIESDIGREVPIILEENQYSTSEIRSKRRYKFVLLTIGSRGDVQPYISLAKGLLAENHKVKIVTHEEFKPWVESYGIEFATIAGNPAELMSLMVTHKSLSVGFLKEAKEKFTGWIGELLQSSWDACQDADVLIESPSAMAGIHIAEKLQIPYFRAFTMPWTRTRAYPHAFVVPEQKRGGSYNYLTHIIFENVFWKGISGEVNKWREQVLMLPKTNLERLEQNKVPFLYNVSPTVFPPSMDFPHWVKVVGYWFLDEGEADSYDPPKPLLEFMEKAKTDGKKLVYIGFGSIVVSDPKQLTEAVIDAVLSADVRCILNKGWSDRLGKQTGVEVELPEEIYNSGNVPHDWLFGKIDASVHHGGSGTTGATLRAGIPTIIKPFFGDQFFYANRVEDIGVGIGLRKLNSKSLSKAIKEVTTNTRIIEKAKEIGKQIQSENGVSAAIRCLYQEMEYAKKLSKSKQKYWDNQSEDISDDSVSGSWFEV.

The segment covering 1-10 (MSQLRPRDSS) has biased composition (basic and acidic residues). The interval 1–61 (MSQLRPRDSS…DETEAEDDID (61 aa)) is disordered. One can recognise a GRAM 1 domain in the interval 196–235 (EKLKTTFDLSDDDEFVNDYPCWLLHEVFLQGHIYITSRYL). The PH domain occupies 248–347 (VTMSGALSIR…WVTDLRKHIF (100 aa)). Disordered regions lie at residues 422–452 (LTDSDSSESDSDVSGSETNGRSTHRKSKLSR) and 500–531 (VVPNDNDSELKQDHAGDAPKDSEEPSTKPSNW). A compositionally biased stretch (acidic residues) spans 423-432 (TDSDSSESDS). Basic and acidic residues predominate over residues 507-525 (SELKQDHAGDAPKDSEEPS). A GRAM 2 domain is found at 586–652 (SRFRKHFSLP…SDIENVYNLK (67 aa)). 13 residues coordinate UDP-alpha-D-glucose: Ser770, Arg771, Asp773, Asn1046, Asn1072, Val1073, His1075, His1088, Ser1091, Gly1092, Thr1093, Asp1112, and Gln1113.

The protein belongs to the glycosyltransferase 28 family.

The protein resides in the cytoplasm. Its subcellular location is the preautophagosomal structure membrane. It carries out the reaction a sterol + UDP-alpha-D-glucose = a sterol 3-beta-D-glucoside + UDP + H(+). The catalysed reaction is ergosterol + UDP-alpha-D-glucose = ergosteryl 3-beta-D-glucoside + UDP + H(+). Its function is as follows. Sterol glycosyltransferase responsible for the glycosylation of ergosterol to form ergosterol-glucoside. Shows also activity in vitro on other sterols such as cholesterol, beta-sitosterol, stigmasterol and tomatidine. Probable sterol 3-beta-glucosyltransferase that mediates autophagic degradation of peroxisomes (pexophagy). The protein is Sterol 3-beta-glucosyltransferase of Komagataella phaffii (strain GS115 / ATCC 20864) (Yeast).